Reading from the N-terminus, the 399-residue chain is UDP-galactopyranose mutase (399 aa).

FAD-binding positions include serine 25, 44-45 (EK), asparagine 52, and 71-72 (HI). Serine 171, tryptophan 175, tyrosine 200, asparagine 297, arginine 306, and tyrosine 345 together coordinate UDP-alpha-D-galactose. Arginine 374 contributes to the FAD binding site. Tyrosine 380 provides a ligand contact to UDP-alpha-D-galactose. 381–386 (IDMDRA) lines the FAD pocket.

Belongs to the UDP-galactopyranose/dTDP-fucopyranose mutase family. It depends on FAD as a cofactor.

The catalysed reaction is UDP-alpha-D-galactose = UDP-alpha-D-galactofuranose. Involved in the conversion of UDP-GalP into UDP-GalF through a 2-keto intermediate. In Mycoplasma pneumoniae (strain ATCC 29342 / M129 / Subtype 1) (Mycoplasmoides pneumoniae), this protein is UDP-galactopyranose mutase (glf).